A 352-amino-acid polypeptide reads, in one-letter code: DNA polymerase IV (352 aa).

Positions 4 to 185 (IIHVDMDCFF…LPLSKIPGVG (182 aa)) constitute a UmuC domain. Residues aspartate 8 and aspartate 103 each contribute to the Mg(2+) site. Glutamate 104 is an active-site residue.

The protein belongs to the DNA polymerase type-Y family. As to quaternary structure, monomer. It depends on Mg(2+) as a cofactor.

The protein localises to the cytoplasm. The enzyme catalyses DNA(n) + a 2'-deoxyribonucleoside 5'-triphosphate = DNA(n+1) + diphosphate. Functionally, poorly processive, error-prone DNA polymerase involved in untargeted mutagenesis. Copies undamaged DNA at stalled replication forks, which arise in vivo from mismatched or misaligned primer ends. These misaligned primers can be extended by PolIV. Exhibits no 3'-5' exonuclease (proofreading) activity. May be involved in translesional synthesis, in conjunction with the beta clamp from PolIII. The protein is DNA polymerase IV of Yersinia enterocolitica serotype O:8 / biotype 1B (strain NCTC 13174 / 8081).